Reading from the N-terminus, the 359-residue chain is MTKQVLVELGERSYPIEIGQNLFSNSEPLARYLQHKNILIVTNETIAPLYLQSVEAMLSDFACATPVILPDGEQYKTLEQMNAIFTSLLEQNLGRDTVLIALGGGVIGDMTGFAAASYQRGVDFIQIPTTLLSQVDSSVGGKTAVNHPLGKNMIGAFYQPKCVLIDTNCLSTLPKREFAAGMAEVIKYGVIWDAEFFQWLENNVEALKSLDTQALEYAISRCCEIKAEVVEKDETEQAVRALLNLGHTFGHAIEAEMGYGVWLHGEAVSAGTVLAAMTSNKLGLVDESIVCRITALLAAFDLPITAPETMDFEQFIKHMRRDKKVLKGQLRLVLPEGIGQAGIYSDVTDELLEEVINCA.

NAD(+) is bound by residues 71 to 76 (DGEQYK), 105 to 109 (GVIGD), 129 to 130 (TT), lysine 142, lysine 151, and 169 to 172 (CLST). Zn(2+) is bound by residues glutamate 184, histidine 247, and histidine 264.

This sequence belongs to the sugar phosphate cyclases superfamily. Dehydroquinate synthase family. The cofactor is Co(2+). Zn(2+) is required as a cofactor. NAD(+) serves as cofactor.

The protein localises to the cytoplasm. It catalyses the reaction 7-phospho-2-dehydro-3-deoxy-D-arabino-heptonate = 3-dehydroquinate + phosphate. It functions in the pathway metabolic intermediate biosynthesis; chorismate biosynthesis; chorismate from D-erythrose 4-phosphate and phosphoenolpyruvate: step 2/7. Functionally, catalyzes the conversion of 3-deoxy-D-arabino-heptulosonate 7-phosphate (DAHP) to dehydroquinate (DHQ). This chain is 3-dehydroquinate synthase, found in Shewanella halifaxensis (strain HAW-EB4).